Consider the following 430-residue polypeptide: Tol-Pal system protein TolB (430 aa).

Residues 1–21 (MKQALRVAFGFLILWASVLHA) form the signal peptide.

This sequence belongs to the TolB family. As to quaternary structure, the Tol-Pal system is composed of five core proteins: the inner membrane proteins TolA, TolQ and TolR, the periplasmic protein TolB and the outer membrane protein Pal. They form a network linking the inner and outer membranes and the peptidoglycan layer.

The protein resides in the periplasm. In terms of biological role, part of the Tol-Pal system, which plays a role in outer membrane invagination during cell division and is important for maintaining outer membrane integrity. TolB occupies a key intermediary position in the Tol-Pal system because it communicates directly with both membrane-embedded components, Pal in the outer membrane and TolA in the inner membrane. The sequence is that of Tol-Pal system protein TolB from Escherichia coli O139:H28 (strain E24377A / ETEC).